The primary structure comprises 325 residues: Heat-inducible transcription repressor HrcA (325 aa).

Belongs to the HrcA family.

Its function is as follows. Negative regulator of class I heat shock genes (grpE-dnaK-dnaJ and groELS operons). Prevents heat-shock induction of these operons. This chain is Heat-inducible transcription repressor HrcA, found in Staphylococcus aureus (strain bovine RF122 / ET3-1).